The following is a 394-amino-acid chain: Chorismate synthase (394 aa).

R48 is a binding site for NADP(+). Residues 52–90 are disordered; sequence QSMITTSRGEPDEVSIQSGLQDGYTTGTPIGMTIENKDA. Polar residues predominate over residues 66-79; sequence SIQSGLQDGYTTGT. FMN-binding positions include 125–127, G297, 312–316, and R339; these read RSS and HAPTS.

This sequence belongs to the chorismate synthase family. FMNH2 serves as cofactor.

The enzyme catalyses 5-O-(1-carboxyvinyl)-3-phosphoshikimate = chorismate + phosphate. It participates in metabolic intermediate biosynthesis; chorismate biosynthesis; chorismate from D-erythrose 4-phosphate and phosphoenolpyruvate: step 7/7. Its function is as follows. Catalyzes the anti-1,4-elimination of the C-3 phosphate and the C-6 proR hydrogen from 5-enolpyruvylshikimate-3-phosphate (EPSP) to yield chorismate, which is the branch point compound that serves as the starting substrate for the three terminal pathways of aromatic amino acid biosynthesis. This reaction introduces a second double bond into the aromatic ring system. The sequence is that of Chorismate synthase from Halobacterium salinarum (strain ATCC 700922 / JCM 11081 / NRC-1) (Halobacterium halobium).